Reading from the N-terminus, the 238-residue chain is Thymidine kinase a (238 aa).

ATP-binding positions include 38–45 (GPMFSGKS), 70–72 (DTR), and 115–118 (DEAQ). The active-site Proton acceptor is the Glu-116. Tyr-147 is a binding site for substrate. The Zn(2+) site is built by Cys-172 and Cys-175. Substrate contacts are provided by residues 191 to 195 (TELIG) and Tyr-200. Cys-204 provides a ligand contact to Zn(2+).

The protein belongs to the thymidine kinase family. As to quaternary structure, monomer and dimer. Dimerization is stimulated by ATP. Expressed ubiquitously.

The protein resides in the cytoplasm. It catalyses the reaction thymidine + ATP = dTMP + ADP + H(+). It functions in the pathway purine metabolism. The protein operates within pyrimidine metabolism. Its function is as follows. Part of the salvage pathway for purine and pyrimidine deoxyribonucleotide synthesis. Phosphorylates preferentially purines over pyrimidines. Mediates tolerance to genotoxins, such as ultraviolet-C (UV-C) irradiation, MMC, a DNA crosslinker, and ZEO, a DNA intercalator, that induce double-strand breaks and thus contributes to several DNA repair pathways by providing deoxythymidine triphosphate that serve as precursors for DNA repair and to balance deoxyribonucleotides pools. The sequence is that of Thymidine kinase a from Arabidopsis thaliana (Mouse-ear cress).